The following is a 104-amino-acid chain: NADH-quinone oxidoreductase subunit K (104 aa).

The next 3 helical transmembrane spans lie at 4–24 (VAYY…AFLI), 28–48 (IITI…SFVA), and 64–84 (IFVF…LAII).

The protein belongs to the complex I subunit 4L family. NDH-1 is composed of 14 different subunits. Subunits NuoA, H, J, K, L, M, N constitute the membrane sector of the complex.

The protein localises to the cell inner membrane. It carries out the reaction a quinone + NADH + 5 H(+)(in) = a quinol + NAD(+) + 4 H(+)(out). Its function is as follows. NDH-1 shuttles electrons from NADH, via FMN and iron-sulfur (Fe-S) centers, to quinones in the respiratory chain. The immediate electron acceptor for the enzyme in this species is believed to be ubiquinone. Couples the redox reaction to proton translocation (for every two electrons transferred, four hydrogen ions are translocated across the cytoplasmic membrane), and thus conserves the redox energy in a proton gradient. This Acidobacterium capsulatum (strain ATCC 51196 / DSM 11244 / BCRC 80197 / JCM 7670 / NBRC 15755 / NCIMB 13165 / 161) protein is NADH-quinone oxidoreductase subunit K.